Reading from the N-terminus, the 403-residue chain is Mitochondrial intermembrane space import and assembly protein 40 (403 aa).

The N-terminal 31 residues, 1–31 (MLRNLVVRNACRNRPSIQVARGLCRHQTRRL), are a transit peptide targeting the mitochondrion. At 33–46 (ASSPQFGRNSNQEK) the chain is on the mitochondrial matrix side. A helical; Signal-anchor for type II membrane protein transmembrane segment spans residues 47-66 (TAGFIMGILSMAGALYFIAP). Topologically, residues 67–403 (NRKPLFASRK…KEPLNEESKP (337 aa)) are mitochondrial intermembrane. Composition is skewed to basic and acidic residues over residues 75–84 (RKVESDKTAE), 101–118 (NNSK…KNDE), 147–168 (EDNK…KDDE), 206–230 (SEKK…KTTT), and 262–271 (EELRKQEEKQ). The disordered stretch occupies residues 75–292 (RKVESDKTAE…GAYNPDTGEI (218 aa)). Cystine bridges form between C296–C298, C307–C340, and C317–C330. A CHCH domain is found at 304–348 (HGPCGEEFKSAFSCFVYSEAEPKGIDCVEKFQHMQDCFRKYPEHY). 2 short sequence motifs (cx9C motif) span residues 307-317 (CGEEFKSAFSC) and 330-340 (CVEKFQHMQDC). The segment at 351 to 403 (QLKETSDDEEPQDKVKVNTIESAPNVSSAKENAAKKAEQSDVKKEPLNEESKP) is disordered. Residues 369-378 (TIESAPNVSS) are compositionally biased toward polar residues. A compositionally biased stretch (basic and acidic residues) spans 382–403 (NAAKKAEQSDVKKEPLNEESKP).

Monomer. Interacts with the FAD-linked sulfhydryl oxidase ERV1 and with the substrate proteins COX17, TIM9, and TIM13, forming transient intermolecular disulfide bridges. Interacts with FCJ1. The cofactor is Cu(2+). Zn(2+) is required as a cofactor.

It is found in the mitochondrion inner membrane. Its function is as follows. Required for the import and folding of small cysteine-containing proteins (small Tim) in the mitochondrial intermembrane space (IMS). Forms a redox cycle with ERV1 that involves a disulfide relay system. Precursor proteins to be imported into the IMS are translocated in their reduced form into the mitochondria. The oxidized form of MIA40 forms a transient intermolecular disulfide bridge with the reduced precursor protein, resulting in oxidation of the precursor protein that now contains an intramolecular disulfide bond and is able to undergo folding in the IMS. Reduced MIA40 is reoxidized by FAD-linked sulfhydryl oxidase ERV1. The polypeptide is Mitochondrial intermembrane space import and assembly protein 40 (MIA40) (Saccharomyces cerevisiae (strain ATCC 204508 / S288c) (Baker's yeast)).